The primary structure comprises 290 residues: Sodium/potassium-transporting ATPase subunit beta-2 (290 aa).

Residues 1-39 (MVIQKEKKSCGQVVEEWKEFVWNPRTHQFMGRTGTSWAF) lie on the Cytoplasmic side of the membrane. Residues 40–67 (ILLFYLVFYGFLTAMFTLTMWVMLQTVS) traverse the membrane as a helical; Signal-anchor for type II membrane protein segment. The Extracellular portion of the chain corresponds to 68–290 (EHTPKYQDRL…VAFKLRINKT (223 aa)). N-linked (GlcNAc...) asparagine glycosylation is found at asparagine 96 and asparagine 118. A disulfide bridge links cysteine 129 with cysteine 150. N-linked (GlcNAc...) asparagine glycans are attached at residues asparagine 153 and asparagine 159. Cysteine 160 and cysteine 177 are joined by a disulfide. N-linked (GlcNAc...) asparagine glycans are attached at residues asparagine 193, asparagine 197, and asparagine 238. The segment at 193 to 290 (NQSMNVTCAG…VAFKLRINKT (98 aa)) is immunoglobulin-like. The cysteines at positions 200 and 261 are disulfide-linked.

It belongs to the X(+)/potassium ATPases subunit beta family. In terms of assembly, the sodium/potassium-transporting ATPase is composed of a catalytic alpha subunit, an auxiliary non-catalytic beta subunit and an additional regulatory subunit. Interacts with BSG.

Its subcellular location is the cell membrane. In terms of biological role, this is the non-catalytic component of the active enzyme, which catalyzes the hydrolysis of ATP coupled with the exchange of Na(+) and K(+) ions across the plasma membrane. The exact function of the beta-2 subunit is not known. Mediates cell adhesion of neurons and astrocytes, and promotes neurite outgrowth. In Oryctolagus cuniculus (Rabbit), this protein is Sodium/potassium-transporting ATPase subunit beta-2 (ATP1B2).